A 434-amino-acid chain; its full sequence is MIRKVIFFVAGVFLSASLIVMAQSITTNNEQNTYKQLARFGDIFERVRTQYVTIPDDQKLIENAINGMLLSLDPHSSYMDAEKAKDMRDSTKGEFGGLGIEVTMENNLIKVVSPIDDTPAAKAGVLAGDFISKIDGKQISGQTLNEAVDQMRGPAGTPITLTINRFGVDKPLDIKIVRDIIKVKAVKYRVEGDIGYLRLIQFTEKTFSDLQAAIKDIQSKIPTDKLKGYVLDLRLNPGGLLDQAISVTDAFLNKGEIVSTRGRKQNDVMRFDAKLGDLTDEKPIIVLINGGSASASEIVAGALQDHRRATIIGTQSFGKGSVQTIIPLGENGALRLTTALYYTPSGTSIQGIGITPDIVVEQPLPEKYKGYDVTLGESELRGHIKGKQESDKGSGSAAFVPRDPKDDVQLNEAYKLLRGEITHAAFPPDPNKVF.

Residues 1–23 (MIRKVIFFVAGVFLSASLIVMAQ) form the signal peptide. Residues 86-166 (DMRDSTKGEF…TPITLTINRF (81 aa)) enclose the PDZ domain. Residues S294, D305, and K319 each act as charge relay system in the active site. Over residues 383–392 (HIKGKQESDK) the composition is skewed to basic and acidic residues. Residues 383-406 (HIKGKQESDKGSGSAAFVPRDPKD) are disordered.

Belongs to the peptidase S41A family. Post-translationally, may undergo autocatalytic processing at the C-terminus (398-434 or 425-434 missing).

It is found in the secreted. It carries out the reaction The enzyme shows specific recognition of a C-terminal tripeptide, Xaa-Yaa-Zaa, in which Xaa is preferably Ala or Leu, Yaa is preferably Ala or Tyr, and Zaa is preferably Ala, but then cleaves at a variable distance from the C-terminus. A typical cleavage is -Ala-Ala-|-Arg-Ala-Ala-Lys-Glu-Asn-Tyr-Ala-Leu-Ala-Ala.. Functionally, involved in protection of the bacterium from thermal and osmotic stresses. The protein is Carboxy-terminal-processing protease (ctpA) of Bartonella bacilliformis (strain ATCC 35685 / KC583 / Herrer 020/F12,63).